We begin with the raw amino-acid sequence, 538 residues long: Prickle planar cell polarity protein 3-A (538 aa).

One can recognise a PET domain in the interval 66-175 (SGSQRDSLCE…CVRPVSGTMS (110 aa)). LIM zinc-binding domains are found at residues 177-241 (TVCQ…ELKR), 242-302 (PRCL…LYAQ), and 305-366 (DSCG…NATP). Polar residues predominate over residues 369 to 378 (SFSPSQTDLS). 3 disordered regions span residues 369–398 (SFSPSQTDLSFQKETKDVGTSTNHELDGDS), 433–463 (RGAPKEFSRECPNRRSLPDLNSHTRTPTRVT), and 475–538 (SVSL…CLLS). The span at 435–449 (APKEFSRECPNRRSL) shows a compositional bias: basic and acidic residues. Residues 451–463 (DLNSHTRTPTRVT) show a composition bias toward polar residues. Low complexity-rich tracts occupy residues 475–488 (SVSLSHPSFTSSSS) and 514–523 (APPTHAPTST).

It belongs to the prickle / espinas / testin family. As to quaternary structure, interacts with vangl2 via its C-terminus. The vangl2-dependent membrane recruitment of prickle3 is a prerequisite for its polarization. Interacts with wtip. Wtip is involved in the recruitment of prickle3 to the basal body. In terms of tissue distribution, predominantly expressed in the epidermal ectoderm.

Its subcellular location is the cytoplasm. The protein localises to the cell membrane. It is found in the mitochondrion. Functionally, involved in the planar cell polarity (PCP) pathway that is essential for the polarization of epithelial cells during morphogenetic processes, including gastrulation and neurulation. PCP is maintained by two molecular modules, the global and the core modules. Proteins of the core module include the proteins Frizzled (Fz), Disheveled (Dsh), Van Gogh (Vang), Prickle (Pk), Flamingo (Fmi, Celsr) and Diego (Dgo). The core module proteins develop subcellular asymmetry, accumulating in two groups on opposite sides of epithelial cells. Distinct proximal (Vang, Pk and Fmi) and distal (Fz, Dsh, Dgo and Fmi) complexes segregate to opposite sides of the cell, where they interact with the opposite complex in the neighboring cell at or near the adherents junctions. Directional information to orient polarization with respect to the tissue axes is provided by the global module which involves Wnt proteins. Involved in the organization of the basal body. Involved in cilia growth and positioning. Required for proper assembly, stability, and function of mitochondrial membrane ATP synthase (mitochondrial complex V). This is Prickle planar cell polarity protein 3-A (prickle3-a) from Xenopus laevis (African clawed frog).